A 310-amino-acid chain; its full sequence is Ribosomal RNA small subunit methyltransferase H (310 aa).

Residues 32–34 (GGH), D52, F79, D100, and Q107 each bind S-adenosyl-L-methionine.

It belongs to the methyltransferase superfamily. RsmH family.

Its subcellular location is the cytoplasm. The catalysed reaction is cytidine(1402) in 16S rRNA + S-adenosyl-L-methionine = N(4)-methylcytidine(1402) in 16S rRNA + S-adenosyl-L-homocysteine + H(+). Functionally, specifically methylates the N4 position of cytidine in position 1402 (C1402) of 16S rRNA. The sequence is that of Ribosomal RNA small subunit methyltransferase H from Geobacillus kaustophilus (strain HTA426).